Reading from the N-terminus, the 859-residue chain is Active breakpoint cluster region-related protein (859 aa).

Residues 26–84 (TDEYDGEGNEEQKGPPEGSETMPYIDESPTMSPQLSARSQGGGDGVSPTPPEGLAPGVE) form a disordered region. Positions 54–64 (PTMSPQLSARS) are enriched in polar residues. S57 carries the post-translational modification Phosphoserine. Residues 91–284 (MRKLVLSGFL…QNFLSSINED (194 aa)) enclose the DH domain. A PH domain is found at 301 to 459 (QLVKDGFLVE…WREAIQKLQK (159 aa)). Residues 484–613 (TVHNIPVTSN…ETKNWHTDVI (130 aa)) enclose the C2 domain. The region spanning 647 to 845 (VKISVVTKRE…YYLQHPPISF (199 aa)) is the Rho-GAP domain.

Interacts with DLG4. Highly enriched in the brain. Much weaker expression in heart, lung and muscle.

The protein resides in the cell projection. It is found in the dendritic spine. It localises to the axon. Its subcellular location is the synapse. Protein with a unique structure having two opposing regulatory activities toward small GTP-binding proteins. The C-terminus is a GTPase-activating protein domain which stimulates GTP hydrolysis by RAC1, RAC2 and CDC42. Accelerates the intrinsic rate of GTP hydrolysis of RAC1 or CDC42, leading to down-regulation of the active GTP-bound form. The central Dbl homology (DH) domain functions as a guanine nucleotide exchange factor (GEF) that modulates the GTPases CDC42, RHOA and RAC1. Promotes the conversion of CDC42, RHOA and RAC1 from the GDP-bound to the GTP-bound form. Functions as an important negative regulator of neuronal RAC1 activity. Regulates macrophage functions such as CSF-1 directed motility and phagocytosis through the modulation of RAC1 activity. In Homo sapiens (Human), this protein is Active breakpoint cluster region-related protein.